The following is a 224-amino-acid chain: 7-cyano-7-deazaguanine synthase (224 aa).

9–19 (ISGGMDSTLCA) is an ATP binding site. Zn(2+) is bound by residues cysteine 190, cysteine 198, cysteine 201, and cysteine 204.

It belongs to the QueC family. Zn(2+) is required as a cofactor.

It catalyses the reaction 7-carboxy-7-deazaguanine + NH4(+) + ATP = 7-cyano-7-deazaguanine + ADP + phosphate + H2O + H(+). Its pathway is purine metabolism; 7-cyano-7-deazaguanine biosynthesis. In terms of biological role, catalyzes the ATP-dependent conversion of 7-carboxy-7-deazaguanine (CDG) to 7-cyano-7-deazaguanine (preQ(0)). The sequence is that of 7-cyano-7-deazaguanine synthase from Campylobacter jejuni subsp. doylei (strain ATCC BAA-1458 / RM4099 / 269.97).